We begin with the raw amino-acid sequence, 495 residues long: MSEEMNDQMLVRRQKLQELYDLGIDPFGSKFDRSGLSSDLKEEWDQYSKEELVEKEADSHVAIAGRLMTKRGKGKAGFAHVQDLAGQIQIYVRKDQVGDDEFDLWKNADLGDIVGVEGVMFKTNTGELSVKAKKFTLLTKSLRPLPDKFHGLQDIEQRYRQRYLDLITNEDSTRTFINRSKIIQEMRNYLNNKGFLEVETPMMHQIAGGAAARPFVTHHNALDATLYMRIAIELHLKRLIVGGLEKVYEIGRVFRNEGVSTRHNPEFTMIELYEAYADYHDIMDLTESMVRHIANEVLGSAKVQYNGETIDLESAWTRLHIVDAVKEATGVDFYEVKSDEEAKALAKEHGIEIKDTMKYGHILNEFFEQKVEETLIQPTFIYGHPTEISPLAKKNPEDPRFTDRFELFIVGREHANAFTELNDPIDQKGRFEAQLAEKAQGNDEAHEMDEDYIEALEYGMPPTGGLGIGIDRLVMLLTDSPSIRDVLLFPYMRQK.

Positions 406 and 413 each coordinate Mg(2+).

Belongs to the class-II aminoacyl-tRNA synthetase family. As to quaternary structure, homodimer. Mg(2+) serves as cofactor.

It is found in the cytoplasm. It carries out the reaction tRNA(Lys) + L-lysine + ATP = L-lysyl-tRNA(Lys) + AMP + diphosphate. The polypeptide is Lysine--tRNA ligase (Staphylococcus aureus (strain MRSA252)).